The following is a 169-amino-acid chain: Inorganic pyrophosphatase (169 aa).

Substrate is bound by residues K20, R34, and Y46. D56, D61, and D93 together coordinate Mg(2+). Substrate is bound at residue Y130.

Belongs to the PPase family. In terms of assembly, homohexamer. It depends on Mg(2+) as a cofactor.

Its subcellular location is the cytoplasm. It catalyses the reaction diphosphate + H2O = 2 phosphate + H(+). Its function is as follows. Catalyzes the hydrolysis of inorganic pyrophosphate (PPi) forming two phosphate ions. The chain is Inorganic pyrophosphatase from Methanosarcina mazei (strain ATCC BAA-159 / DSM 3647 / Goe1 / Go1 / JCM 11833 / OCM 88) (Methanosarcina frisia).